The chain runs to 96 residues: Small ribosomal subunit protein uS19 (96 aa).

It belongs to the universal ribosomal protein uS19 family.

In terms of biological role, protein S19 forms a complex with S13 that binds strongly to the 16S ribosomal RNA. The polypeptide is Small ribosomal subunit protein uS19 (Gemmatimonas aurantiaca (strain DSM 14586 / JCM 11422 / NBRC 100505 / T-27)).